A 1381-amino-acid chain; its full sequence is DNA-directed RNA polymerase subunit beta' (1381 aa).

The Zn(2+) site is built by Cys-70, Cys-72, Cys-85, and Cys-88. Mg(2+) contacts are provided by Asp-461, Asp-463, and Asp-465. Zn(2+)-binding residues include Cys-801, Cys-875, Cys-882, and Cys-885. Residues 1362–1381 (VEIEGDENSNKKSLDMHAAN) form a disordered region. The segment covering 1369 to 1381 (NSNKKSLDMHAAN) has biased composition (basic and acidic residues).

Belongs to the RNA polymerase beta' chain family. The RNAP catalytic core consists of 2 alpha, 1 beta, 1 beta' and 1 omega subunit. When a sigma factor is associated with the core the holoenzyme is formed, which can initiate transcription. Requires Mg(2+) as cofactor. The cofactor is Zn(2+).

The catalysed reaction is RNA(n) + a ribonucleoside 5'-triphosphate = RNA(n+1) + diphosphate. Its function is as follows. DNA-dependent RNA polymerase catalyzes the transcription of DNA into RNA using the four ribonucleoside triphosphates as substrates. In Syntrophus aciditrophicus (strain SB), this protein is DNA-directed RNA polymerase subunit beta'.